We begin with the raw amino-acid sequence, 102 residues long: uncharacterized protein (102 aa).

A run of 2 helical transmembrane segments spans residues F21–F43 and S58–C80.

It localises to the membrane. This is an uncharacterized protein from Saccharomyces cerevisiae (strain ATCC 204508 / S288c) (Baker's yeast).